The primary structure comprises 675 residues: Collagen alpha-3(IX) chain (675 aa).

The first 21 residues, 1–21, serve as a signal peptide directing secretion; the sequence is MTVFPTLGLLFLCQLLATTSA. 2 disordered regions span residues 22-517 and 542-660; these read QRVG…KEAS and KPLS…ICDT. The tract at residues 25–515 is triple-helical region 3 (COL3); the sequence is GPQGPPGPRG…TGKPGPPGKE (491 aa). 2 stretches are compositionally biased toward pro residues: residues 27–38 and 51–60; these read QGPPGPRGPPGP and SGLPGPPGPK. A compositionally biased stretch (low complexity) spans 62–87; sequence APGKPGAAGEAGLPGLPGVDGLTGTD. Over residues 105-125 the composition is skewed to pro residues; that stretch reads AGPPGPAGKGLPGPPGPPGPS. Over residues 126–135 the composition is skewed to gly residues; sequence GLPGGNGFRG. Pro residues-rich tracts occupy residues 136-155 and 173-184; these read PPGP…PGPP and LCPPGPPGPPGM. The span at 218–233 shows a compositional bias: low complexity; that stretch reads PGSVGLQGPRGLRGLP. The Cell attachment site signature appears at 242–244; the sequence is RGD. A compositionally biased stretch (basic and acidic residues) spans 301–317; it reads KDGRDGAPGLDGEKGDA. Residues 361–374 are compositionally biased toward low complexity; that stretch reads EPGIPGDVGIPGDR. A glycan (N-linked (GlcNAc...) asparagine) is linked at asparagine 479. Positions 481 to 508 are enriched in low complexity; the sequence is TAGAPGIPGHPGPMGHQGEQGVPGITGK. The nonhelical region 3 (NC3) stretch occupies residues 516-546; it reads ASEQHIRELCGEMINDQIAQLAANLRKPLSP. The interval 547-626 is triple-helical region 2 (COL2); sequence GMTGRPGPAG…QGLPGVPGIS (80 aa). Residues 569–582 are compositionally biased toward low complexity; that stretch reads HPGARGPPGYRGPT. The short motif at 591-593 is the Cell attachment site element; the sequence is RGD. The span at 613 to 624 shows a compositional bias: low complexity; sequence DQGPQGLPGVPG. A nonhelical region 2 (NC2) region spans residues 627-631; the sequence is KNGRD. The tract at residues 632-658 is triple-helical region 1 (COL1); the sequence is GAQGEPGLPGDPGTPGAVGAQGTPGIC. The nonhelical region 1 (NC1) stretch occupies residues 659 to 675; it reads DTSACMGAVGASTSKKS.

Belongs to the fibril-associated collagens with interrupted helices (FACIT) family. Trimers composed of three different chains: alpha 1(IX), alpha 2(IX), and alpha 3(IX). Post-translationally, prolines at the third position of the tripeptide repeating unit (G-X-Y) are hydroxylated in some or all of the chains.

It localises to the secreted. Its subcellular location is the extracellular space. The protein localises to the extracellular matrix. Collagen type IX is a minor cartilage non-fibrillar collagen. It is associated with type II collagen fibrils. The protein is Collagen alpha-3(IX) chain (COL9A3) of Gallus gallus (Chicken).